The following is a 451-amino-acid chain: Signal recognition particle 54 kDa protein (451 aa).

GTP contacts are provided by residues 105–112 (GVQGTGKT), 187–191 (DTAGR), and 247–250 (TKMD).

This sequence belongs to the GTP-binding SRP family. SRP54 subfamily. Part of the signal recognition particle protein translocation system, which is composed of SRP and FtsY. Archaeal SRP consists of a 7S RNA molecule of 300 nucleotides and two protein subunits: SRP54 and SRP19.

Its subcellular location is the cytoplasm. The catalysed reaction is GTP + H2O = GDP + phosphate + H(+). Functionally, involved in targeting and insertion of nascent membrane proteins into the cytoplasmic membrane. Binds to the hydrophobic signal sequence of the ribosome-nascent chain (RNC) as it emerges from the ribosomes. The SRP-RNC complex is then targeted to the cytoplasmic membrane where it interacts with the SRP receptor FtsY. In Acidianus ambivalens (Desulfurolobus ambivalens), this protein is Signal recognition particle 54 kDa protein.